The sequence spans 121 residues: MRSLLVLLALAACASAQYFFRGGDDDNGFFGGDDDNGYFGYFPRFSYPIYRPIYRPIYYPQIIRPFYGYGYGGFNGGYGGLGLYGGYGGFGGYGYRPFSYGYNPFSYGYYGFGDDDGGFDD.

The N-terminal stretch at 1 to 16 (MRSLLVLLALAACASA) is a signal peptide. Glutamine 17 carries the pyrrolidone carboxylic acid modification. 4 consecutive repeat copies span residues 48–51 (PIYR), 52–55 (PIYR), 56–59 (PIYY), and 60–63 (PQII). Residues 48-63 (PIYRPIYRPIYYPQII) form a 4 X 4 AA approximate tandem repeats of P-I-Y-R region.

As to expression, expressed only at the mantle edge where it is found predominantly in the inner side of the outer mantle fold.

Its function is as follows. Displays inhibitory activity against calcium carbonate precipitation, binds calcium and affects crystallization of calcium carbonate in vitro. May be involved in calcification of the prismatic layer of the shell. The chain is Prismalin-14 from Pinctada fucata (Akoya pearl oyster).